We begin with the raw amino-acid sequence, 104 residues long: ATP-dependent Clp protease adapter protein ClpS (104 aa).

It belongs to the ClpS family. In terms of assembly, binds to the N-terminal domain of the chaperone ClpA.

In terms of biological role, involved in the modulation of the specificity of the ClpAP-mediated ATP-dependent protein degradation. The protein is ATP-dependent Clp protease adapter protein ClpS of Nitratidesulfovibrio vulgaris (strain ATCC 29579 / DSM 644 / CCUG 34227 / NCIMB 8303 / VKM B-1760 / Hildenborough) (Desulfovibrio vulgaris).